Reading from the N-terminus, the 480-residue chain is Cytochrome b-c1 complex subunit 1, mitochondrial (480 aa).

A mitochondrion-targeting transit peptide spans 1-34 (MAASAVCRAACSGTQALLRTCRSPALLRLPALRG). N6-acetyllysine is present on residues Lys111 and Lys138. Lys163 bears the N6-acetyllysine; alternate mark. An N6-succinyllysine; alternate modification is found at Lys163. Ser212 is subject to Phosphoserine. A Phosphothreonine modification is found at Thr214.

Belongs to the peptidase M16 family. UQCRC1/QCR1 subfamily. In terms of assembly, component of the ubiquinol-cytochrome c oxidoreductase (cytochrome b-c1 complex, complex III, CIII), a multisubunit enzyme composed of 11 subunits. The complex is composed of 3 respiratory subunits cytochrome b, cytochrome c1 and Rieske protein UQCRFS1, 2 core protein subunits UQCRC1/QCR1 and UQCRC2/QCR2, and 6 low-molecular weight protein subunits UQCRH/QCR6, UQCRB/QCR7, UQCRQ/QCR8, UQCR10/QCR9, UQCR11/QCR10 and subunit 9, the cleavage product of Rieske protein UQCRFS1. The complex exists as an obligatory dimer and forms supercomplexes (SCs) in the inner mitochondrial membrane with NADH-ubiquinone oxidoreductase (complex I, CI) and cytochrome c oxidase (complex IV, CIV), resulting in different assemblies (supercomplex SCI(1)III(2)IV(1) and megacomplex MCI(2)III(2)IV(2)). Interacts with UQCC6. Interacts with STMP1.

The protein resides in the mitochondrion inner membrane. In terms of biological role, component of the ubiquinol-cytochrome c oxidoreductase, a multisubunit transmembrane complex that is part of the mitochondrial electron transport chain which drives oxidative phosphorylation. The respiratory chain contains 3 multisubunit complexes succinate dehydrogenase (complex II, CII), ubiquinol-cytochrome c oxidoreductase (cytochrome b-c1 complex, complex III, CIII) and cytochrome c oxidase (complex IV, CIV), that cooperate to transfer electrons derived from NADH and succinate to molecular oxygen, creating an electrochemical gradient over the inner membrane that drives transmembrane transport and the ATP synthase. The cytochrome b-c1 complex catalyzes electron transfer from ubiquinol to cytochrome c, linking this redox reaction to translocation of protons across the mitochondrial inner membrane, with protons being carried across the membrane as hydrogens on the quinol. In the process called Q cycle, 2 protons are consumed from the matrix, 4 protons are released into the intermembrane space and 2 electrons are passed to cytochrome c. The 2 core subunits UQCRC1/QCR1 and UQCRC2/QCR2 are homologous to the 2 mitochondrial-processing peptidase (MPP) subunits beta-MPP and alpha-MPP respectively, and they seem to have preserved their MPP processing properties. May be involved in the in situ processing of UQCRFS1 into the mature Rieske protein and its mitochondrial targeting sequence (MTS)/subunit 9 when incorporated into complex III. Seems to play an important role in the maintenance of proper mitochondrial function in nigral dopaminergic neurons. This is Cytochrome b-c1 complex subunit 1, mitochondrial (Uqcrc1) from Rattus norvegicus (Rat).